Here is a 251-residue protein sequence, read N- to C-terminus: Ribosomal RNA small subunit methyltransferase J (251 aa).

S-adenosyl-L-methionine contacts are provided by residues 100 to 101 (RD), 116 to 117 (ER), and Asp170.

This sequence belongs to the methyltransferase superfamily. RsmJ family.

Its subcellular location is the cytoplasm. The enzyme catalyses guanosine(1516) in 16S rRNA + S-adenosyl-L-methionine = N(2)-methylguanosine(1516) in 16S rRNA + S-adenosyl-L-homocysteine + H(+). In terms of biological role, specifically methylates the guanosine in position 1516 of 16S rRNA. The sequence is that of Ribosomal RNA small subunit methyltransferase J from Actinobacillus pleuropneumoniae serotype 5b (strain L20).